Reading from the N-terminus, the 68-residue chain is MPSVRSVTCCCLLWMMFSVQLVTPGSPATAQLSGQRTARGPGSAICNMACRLEHGHLYPFCHCRGKRD.

An N-terminal signal peptide occupies residues 1 to 27 (MPSVRSVTCCCLLWMMFSVQLVTPGSP). The propeptide occupies 28 to 39 (ATAQLSGQRTAR). Disulfide bonds link cysteine 46–cysteine 61 and cysteine 50–cysteine 63. Arginine 64 is modified (arginine amide). Positions 65–68 (GKRD) are excised as a propeptide.

The protein belongs to the conotoxin J superfamily. As to expression, expressed by the venom duct.

It is found in the secreted. In terms of biological role, highly inhibits both nicotinic acetylcholine receptors (neuronal (alpha-3/beta-4) and muscular (alpha-1/beta-1/epsilon/delta) subtypes) and the voltage-gated potassium channel Kv1.6/KCNA6 subtype. This Conus planorbis (Planorbis cone) protein is Alpha/kappa-conotoxin-like pl14.2.